We begin with the raw amino-acid sequence, 179 residues long: Translation initiation factor IF-3 (179 aa).

This sequence belongs to the IF-3 family. As to quaternary structure, monomer.

The protein resides in the cytoplasm. In terms of biological role, IF-3 binds to the 30S ribosomal subunit and shifts the equilibrium between 70S ribosomes and their 50S and 30S subunits in favor of the free subunits, thus enhancing the availability of 30S subunits on which protein synthesis initiation begins. The polypeptide is Translation initiation factor IF-3 (Buchnera aphidicola subsp. Schizaphis graminum (strain Sg)).